The primary structure comprises 344 residues: Golgi-associated RAB2 interactor protein 1B (344 aa).

It belongs to the GARIN family.

It localises to the golgi apparatus. Its function is as follows. RAB2B effector protein required for accurate acrosome formation and normal male fertility. In complex with RAB2A/RAB2B, seems to suppress excessive vesicle trafficking during acrosome formation. This Rattus norvegicus (Rat) protein is Golgi-associated RAB2 interactor protein 1B (Garin1b).